The following is a 102-amino-acid chain: uncharacterized protein (102 aa).

Residues 1–43 (MNNAHEENISSVTGFKSTSGSPAIGSSLPGRSGEGRSSSSSSG) are disordered. Residues 9–21 (ISSVTGFKSTSGS) show a composition bias toward polar residues. The segment covering 25 to 43 (GSSLPGRSGEGRSSSSSSG) has biased composition (low complexity).

This is an uncharacterized protein from Saccharomyces cerevisiae (strain ATCC 204508 / S288c) (Baker's yeast).